The primary structure comprises 158 residues: SsrA-binding protein (158 aa).

It belongs to the SmpB family.

It localises to the cytoplasm. Functionally, required for rescue of stalled ribosomes mediated by trans-translation. Binds to transfer-messenger RNA (tmRNA), required for stable association of tmRNA with ribosomes. tmRNA and SmpB together mimic tRNA shape, replacing the anticodon stem-loop with SmpB. tmRNA is encoded by the ssrA gene; the 2 termini fold to resemble tRNA(Ala) and it encodes a 'tag peptide', a short internal open reading frame. During trans-translation Ala-aminoacylated tmRNA acts like a tRNA, entering the A-site of stalled ribosomes, displacing the stalled mRNA. The ribosome then switches to translate the ORF on the tmRNA; the nascent peptide is terminated with the 'tag peptide' encoded by the tmRNA and targeted for degradation. The ribosome is freed to recommence translation, which seems to be the essential function of trans-translation. The chain is SsrA-binding protein from Roseiflexus castenholzii (strain DSM 13941 / HLO8).